Consider the following 156-residue polypeptide: MSRRHAAEKREVLPDAKFGDKVLTKFMNNLMIDGKKSVAERIVYNAFDRVENKIKRAPVEVFHEALDNIKPSVEVRSRRVGGATYQVPVEVRPERREALAIRWLIAAARNRNENTMEERLAGELLDAVQSRGTAVKKREDTHKMAEANKAFSHYRW.

It belongs to the universal ribosomal protein uS7 family. In terms of assembly, part of the 30S ribosomal subunit. Contacts proteins S9 and S11.

One of the primary rRNA binding proteins, it binds directly to 16S rRNA where it nucleates assembly of the head domain of the 30S subunit. Is located at the subunit interface close to the decoding center, probably blocks exit of the E-site tRNA. This chain is Small ribosomal subunit protein uS7, found in Ruegeria pomeroyi (strain ATCC 700808 / DSM 15171 / DSS-3) (Silicibacter pomeroyi).